A 223-amino-acid chain; its full sequence is Deoxyribose-phosphate aldolase (223 aa).

The active-site Proton donor/acceptor is the Asp-92. The active-site Schiff-base intermediate with acetaldehyde is Lys-158. The Proton donor/acceptor role is filled by Lys-188.

This sequence belongs to the DeoC/FbaB aldolase family. DeoC type 1 subfamily.

Its subcellular location is the cytoplasm. The enzyme catalyses 2-deoxy-D-ribose 5-phosphate = D-glyceraldehyde 3-phosphate + acetaldehyde. It participates in carbohydrate degradation; 2-deoxy-D-ribose 1-phosphate degradation; D-glyceraldehyde 3-phosphate and acetaldehyde from 2-deoxy-alpha-D-ribose 1-phosphate: step 2/2. Functionally, catalyzes a reversible aldol reaction between acetaldehyde and D-glyceraldehyde 3-phosphate to generate 2-deoxy-D-ribose 5-phosphate. This is Deoxyribose-phosphate aldolase from Mycobacterium avium (strain 104).